A 187-amino-acid polypeptide reads, in one-letter code: UPF0398 protein SH1465 (187 aa).

Belongs to the UPF0398 family.

This Staphylococcus haemolyticus (strain JCSC1435) protein is UPF0398 protein SH1465.